Consider the following 778-residue polypeptide: Centromere/kinetochore protein zw10 homolog (778 aa).

The stretch at 47-99 (FDRLENLEDIAEMSTRNLSNLIDQTAKDSPEMLAEIKSQAQSCENLVEFLQSM) forms a coiled coil.

The protein belongs to the ZW10 family. Component of the RZZ complex composed of rod-1, czw-1 and zwl-1.

It localises to the chromosome. The protein localises to the centromere. The protein resides in the kinetochore. Its subcellular location is the cytoplasm. It is found in the cytoskeleton. It localises to the spindle. Functionally, essential component of the mitotic checkpoint, which prevents cells from prematurely exiting mitosis. Required for the assembly of the dynein-dynactin and mdf-1-mdf-2 complexes onto kinetochores. Its function related to the spindle assembly machinery and kinetochore-microtubule attachments likely depends on its association in the mitotic RZZ complex. The RZZ complex recruits the spindly-like protein spdl-1 to kinetochores. To prevent irregular chromosome segregation, the complex also inhibits the attachment of the kinetochore-associated NDC80 complex to microtubules. The recruitment of spdl-1 to kinetochores relieves this inhibition. Required for embryonic development. The polypeptide is Centromere/kinetochore protein zw10 homolog (Caenorhabditis elegans).